The chain runs to 407 residues: Indoleamine 2,3-dioxygenase 2 (407 aa).

His-347 is a heme binding site.

This sequence belongs to the indoleamine 2,3-dioxygenase family. The cofactor is heme. As to expression, detected in liver, small intestine, spleen, placenta, thymus, lung, brain, kidney, and colon. Also expressed at low level in testis and thyroid. Not expressed in the majority of human tumor samples (&gt;99%).

It catalyses the reaction L-tryptophan + O2 = N-formyl-L-kynurenine. The protein operates within amino-acid degradation; L-tryptophan degradation via kynurenine pathway; L-kynurenine from L-tryptophan: step 1/2. Activity is inhibited by D-1MT (1-methyl-D-tryptophan) and MTH-trp (methylthiohydantoin-DL-tryptophan) but not L-1MT (1-methyl-L-tryptophan). In terms of biological role, catalyzes the first and rate limiting step of the catabolism of the essential amino acid tryptophan along the kynurenine pathway. Involved in immune regulation. May not play a significant role in tryptophan-related tumoral resistance. This chain is Indoleamine 2,3-dioxygenase 2, found in Homo sapiens (Human).